Here is an 86-residue protein sequence, read N- to C-terminus: Small ribosomal subunit protein bS16 (86 aa).

This sequence belongs to the bacterial ribosomal protein bS16 family.

The protein is Small ribosomal subunit protein bS16 of Methylacidiphilum infernorum (isolate V4) (Methylokorus infernorum (strain V4)).